A 421-amino-acid chain; its full sequence is Testin (421 aa).

The PET domain occupies 92–199 (MILTNPVAAK…GDVKLPCEMD (108 aa)). Residues 133-164 (EKQPVAGSEGAQYRKKQLAKQLPAHDQDPSKC) form a disordered region. Positions 155-164 (PAHDQDPSKC) are enriched in basic and acidic residues. LIM zinc-binding domains are found at residues 234–297 (YFCY…CDSE), 299–359 (PRCA…NHAV), and 362–421 (QGCH…KMMS).

This sequence belongs to the prickle / espinas / testin family. As to quaternary structure, interacts via LIM domain 1 with ZYX. Interacts (via LIM domain 3) with ENAH and VASP. Interacts with ALKBH4, talin, actin, alpha-actinin, GRIP1 and PXN. Interacts (via LIM domain 2) with ACTL7A (via N-terminus). Heterodimer with ACTL7A; the heterodimer interacts with ENAH to form a heterotrimer.

It is found in the cytoplasm. The protein resides in the cell junction. The protein localises to the focal adhesion. Functionally, scaffold protein that may play a role in cell adhesion, cell spreading and in the reorganization of the actin cytoskeleton. Plays a role in the regulation of cell proliferation. May act as a tumor suppressor. The polypeptide is Testin (TES) (Plecturocebus moloch (Dusky titi monkey)).